Reading from the N-terminus, the 248-residue chain is tRNA (guanine-N(1)-)-methyltransferase (248 aa).

S-adenosyl-L-methionine contacts are provided by residues Gly113 and 133-138 (VGDYVL).

This sequence belongs to the RNA methyltransferase TrmD family. Homodimer.

The protein resides in the cytoplasm. The catalysed reaction is guanosine(37) in tRNA + S-adenosyl-L-methionine = N(1)-methylguanosine(37) in tRNA + S-adenosyl-L-homocysteine + H(+). Specifically methylates guanosine-37 in various tRNAs. This Shewanella sp. (strain W3-18-1) protein is tRNA (guanine-N(1)-)-methyltransferase.